A 473-amino-acid chain; its full sequence is 7-dehydrocholesterol reductase (473 aa).

The interval 1–20 is disordered; that stretch reads MGERRRANASRGDKKVANGE. 6 consecutive transmembrane segments (helical) span residues 36–56, 97–117, 175–195, 264–284, 304–324, and 329–349; these read FSLA…YYFV, IYLA…DILH, WIPL…FALV, VTNS…DFFW, LGWG…LYLV, and ELST…YYIF. NADP(+) contacts are provided by residues Lys-356, Arg-360, Met-393, Trp-398, and 405–406; that span reads NY. A helical membrane pass occupies residues 419-439; that stretch reads ACGFDHLLPYFYFIYMTILLV. Residues Asp-445, 449–453, and Tyr-460 contribute to the NADP(+) site; that span reads CSSKY.

The protein belongs to the ERG4/ERG24 family.

Its subcellular location is the endoplasmic reticulum membrane. The catalysed reaction is cholesterol + NADP(+) = 7-dehydrocholesterol + NADPH + H(+). It carries out the reaction 7-dehydrodesmosterol + NADPH + H(+) = desmosterol + NADP(+). It participates in steroid biosynthesis; cholesterol biosynthesis. In terms of biological role, catalyzes the last step of the cholesterol synthesis pathway, which transforms cholesta-5,7-dien-3beta-ol (7-dehydrocholesterol,7-DHC) into cholesterol by reducing the C7-C8 double bond of its sterol core. Can also metabolize cholesta-5,7,24-trien-3beta-ol (7-dehydrodemosterol, 7-DHD) to desmosterol, which is then metabolized by the Delta(24)-sterol reductase (DHCR24) to cholesterol. Modulates ferroptosis (a form of regulated cell death driven by iron-dependent lipid peroxidation) through the metabolic breakdown of the anti-ferroptotic metabolites 7-DHC and 7-DHD which, when accumulated, divert the propagation of peroxyl radical-mediated damage from phospholipid components to its sterol core, protecting plasma and mitochondrial membranes from phospholipid autoxidation. The protein is 7-dehydrocholesterol reductase (dhcr7) of Xenopus laevis (African clawed frog).